Consider the following 322-residue polypeptide: D-alanine--D-alanine ligase (322 aa).

Positions 110–310 (KAVLAAAGIP…FDRLVFWIVE (201 aa)) constitute an ATP-grasp domain. 137-191 (MPPPYVVKPNAEGSSVGVSLVFEGANGPPRQLAAPDWAFGEQVMVEPYIPGLELA) contacts ATP. Residues aspartate 263, glutamate 277, and asparagine 279 each contribute to the Mg(2+) site.

This sequence belongs to the D-alanine--D-alanine ligase family. The cofactor is Mg(2+). It depends on Mn(2+) as a cofactor.

It localises to the cytoplasm. It carries out the reaction 2 D-alanine + ATP = D-alanyl-D-alanine + ADP + phosphate + H(+). The protein operates within cell wall biogenesis; peptidoglycan biosynthesis. In terms of biological role, cell wall formation. The chain is D-alanine--D-alanine ligase from Caulobacter sp. (strain K31).